Consider the following 400-residue polypeptide: Acetylornithine aminotransferase (400 aa).

Residues Gly-102 to Ala-103 and Phe-135 contribute to the pyridoxal 5'-phosphate site. N(2)-acetyl-L-ornithine is bound at residue Arg-138. Residue Asp-220–Gln-223 participates in pyridoxal 5'-phosphate binding. At Lys-249 the chain carries N6-(pyridoxal phosphate)lysine. A N(2)-acetyl-L-ornithine-binding site is contributed by Ser-276. Thr-277 is a pyridoxal 5'-phosphate binding site.

Belongs to the class-III pyridoxal-phosphate-dependent aminotransferase family. ArgD subfamily. Homodimer. Requires pyridoxal 5'-phosphate as cofactor.

It localises to the cytoplasm. The enzyme catalyses N(2)-acetyl-L-ornithine + 2-oxoglutarate = N-acetyl-L-glutamate 5-semialdehyde + L-glutamate. It participates in amino-acid biosynthesis; L-arginine biosynthesis; N(2)-acetyl-L-ornithine from L-glutamate: step 4/4. This is Acetylornithine aminotransferase from Gloeobacter violaceus (strain ATCC 29082 / PCC 7421).